The primary structure comprises 252 residues: Phosphoglycolate phosphatase (252 aa).

The active-site Nucleophile is D13. Mg(2+) is bound by residues D13, D15, and D192.

Belongs to the HAD-like hydrolase superfamily. CbbY/CbbZ/Gph/YieH family. In terms of assembly, monomer. Mg(2+) serves as cofactor. The cofactor is chloride.

It carries out the reaction 2-phosphoglycolate + H2O = glycolate + phosphate. Its pathway is organic acid metabolism; glycolate biosynthesis; glycolate from 2-phosphoglycolate: step 1/1. In terms of biological role, specifically catalyzes the dephosphorylation of 2-phosphoglycolate. Is involved in the dissimilation of the intracellular 2-phosphoglycolate formed during the DNA repair of 3'-phosphoglycolate ends, a major class of DNA lesions induced by oxidative stress. The chain is Phosphoglycolate phosphatase from Shigella boydii serotype 4 (strain Sb227).